We begin with the raw amino-acid sequence, 378 residues long: GTPase Obg (378 aa).

In terms of domain architecture, Obg spans 1–159 (MKFVDEATIE…RRLRLELKVL (159 aa)). Residues 160–336 (ADVGLLGLPN…LIWALQDYLD (177 aa)) form the OBG-type G domain. GTP is bound by residues 166–173 (GLPNAGKS), 191–195 (FTTLH), 213–216 (DIPG), 288–291 (NKLD), and 317–319 (SGL). Ser-173 and Thr-193 together coordinate Mg(2+). The disordered stretch occupies residues 345-378 (AQDQADGTYVAEDPRFDATRSDAAPPGAPRGGDE).

Belongs to the TRAFAC class OBG-HflX-like GTPase superfamily. OBG GTPase family. In terms of assembly, monomer. Mg(2+) serves as cofactor.

The protein localises to the cytoplasm. In terms of biological role, an essential GTPase which binds GTP, GDP and possibly (p)ppGpp with moderate affinity, with high nucleotide exchange rates and a fairly low GTP hydrolysis rate. Plays a role in control of the cell cycle, stress response, ribosome biogenesis and in those bacteria that undergo differentiation, in morphogenesis control. The sequence is that of GTPase Obg from Bordetella petrii (strain ATCC BAA-461 / DSM 12804 / CCUG 43448).